The primary structure comprises 128 residues: Ribosome-binding factor A (128 aa).

It belongs to the RbfA family. Monomer. Binds 30S ribosomal subunits, but not 50S ribosomal subunits or 70S ribosomes.

It localises to the cytoplasm. Its function is as follows. One of several proteins that assist in the late maturation steps of the functional core of the 30S ribosomal subunit. Associates with free 30S ribosomal subunits (but not with 30S subunits that are part of 70S ribosomes or polysomes). Required for efficient processing of 16S rRNA. May interact with the 5'-terminal helix region of 16S rRNA. The chain is Ribosome-binding factor A from Saccharophagus degradans (strain 2-40 / ATCC 43961 / DSM 17024).